We begin with the raw amino-acid sequence, 647 residues long: Acetyl-coenzyme A synthetase (647 aa).

CoA is bound by residues 190 to 193 (RGGK), Thr-310, and Asn-334. ATP contacts are provided by residues 386 to 388 (GEP), 410 to 415 (DTWWQT), Asp-499, and Arg-514. Ser-522 is a CoA binding site. Position 525 (Arg-525) interacts with ATP. Mg(2+) is bound by residues Val-536, His-538, and Val-541. Arg-583 is a binding site for CoA. Lys-608 bears the N6-acetyllysine mark.

The protein belongs to the ATP-dependent AMP-binding enzyme family. The cofactor is Mg(2+). Acetylated. Deacetylation by the SIR2-homolog deacetylase activates the enzyme.

It carries out the reaction acetate + ATP + CoA = acetyl-CoA + AMP + diphosphate. Functionally, catalyzes the conversion of acetate into acetyl-CoA (AcCoA), an essential intermediate at the junction of anabolic and catabolic pathways. AcsA undergoes a two-step reaction. In the first half reaction, AcsA combines acetate with ATP to form acetyl-adenylate (AcAMP) intermediate. In the second half reaction, it can then transfer the acetyl group from AcAMP to the sulfhydryl group of CoA, forming the product AcCoA. This chain is Acetyl-coenzyme A synthetase, found in Xanthomonas axonopodis pv. citri (strain 306).